The chain runs to 548 residues: Glucose-6-phosphate isomerase 1 (548 aa).

The active-site Proton donor is the glutamate 353. Active-site residues include histidine 384 and lysine 512.

The protein belongs to the GPI family.

The protein localises to the cytoplasm. It catalyses the reaction alpha-D-glucose 6-phosphate = beta-D-fructose 6-phosphate. It participates in carbohydrate biosynthesis; gluconeogenesis. It functions in the pathway carbohydrate degradation; glycolysis; D-glyceraldehyde 3-phosphate and glycerone phosphate from D-glucose: step 2/4. Its function is as follows. Catalyzes the reversible isomerization of glucose-6-phosphate to fructose-6-phosphate. The chain is Glucose-6-phosphate isomerase 1 from Neisseria gonorrhoeae (strain ATCC 700825 / FA 1090).